The chain runs to 220 residues: Putative cobalt transport protein CbiM (220 aa).

6 helical membrane passes run 6-26 (GFLP…VISY), 45-65 (IAVA…SVTG), 74-94 (GIAV…IVLL), 107-127 (TLGA…WVVF), 153-173 (LVTS…AGVV), and 188-208 (IPIG…IAMS).

It belongs to the CbiM family. Forms an energy-coupling factor (ECF) transporter complex composed of an ATP-binding protein (A component, CbiO), a transmembrane protein (T component, CbiQ) and 2 possible substrate-capture proteins (S components, CbiM and CbiN) of unknown stoichimetry.

It localises to the cell membrane. Its pathway is cofactor biosynthesis; adenosylcobalamin biosynthesis. In terms of biological role, part of the energy-coupling factor (ECF) transporter complex CbiMNOQ involved in cobalt import. The protein is Putative cobalt transport protein CbiM of Halobacterium salinarum (strain ATCC 29341 / DSM 671 / R1).